The following is a 346-amino-acid chain: Putative agmatine deiminase (346 aa).

The active-site Amidino-cysteine intermediate is the C333.

The protein belongs to the agmatine deiminase family.

It catalyses the reaction agmatine + H2O = N-carbamoylputrescine + NH4(+). The polypeptide is Putative agmatine deiminase (Legionella pneumophila (strain Paris)).